We begin with the raw amino-acid sequence, 421 residues long: Histidine--tRNA ligase (421 aa).

It belongs to the class-II aminoacyl-tRNA synthetase family. Homodimer.

The protein resides in the cytoplasm. The enzyme catalyses tRNA(His) + L-histidine + ATP = L-histidyl-tRNA(His) + AMP + diphosphate + H(+). The polypeptide is Histidine--tRNA ligase (Nitrosomonas eutropha (strain DSM 101675 / C91 / Nm57)).